We begin with the raw amino-acid sequence, 482 residues long: Interferon-induced protein with tetratricopeptide repeats 5 (482 aa).

TPR repeat units follow at residues 51–84 (LALY…IQQE), 94–127 (LVTW…CKKL), 138–173 (PETD…EPDN), 181–214 (AITV…NPDN), 249–282 (PYVL…TPTS), 338–371 (AFAY…ENIT), 376–410 (HQIH…KDRS), and 435–468 (VQSL…DPEN). The interval 254–260 (YAAKFYR) is interaction with the 5'-triphosphate group of PPP-RNA.

This sequence belongs to the IFIT family. Monomer. Interacts with MAP3K7 and the components of the IKK core complex CHUK, IKBKB and IKBKG; the interaction synergizes the recruitment of IKK to MAP3K7 and enhances IKK phosphorylation.

It is found in the cell projection. It localises to the ruffle membrane. Its function is as follows. Interferon-induced RNA-binding protein involved in the human innate immune response. Has a broad and adaptable RNA structure recognition important for RNA recognition specificity in antiviral defense. Binds precursor and processed tRNAs as well as poly-U-tailed tRNA fragments. Specifically binds single-stranded RNA bearing a 5'-triphosphate group (PPP-RNA), thereby acting as a sensor of viral single-stranded RNAs. Single-stranded PPP-RNAs, which lack 2'-O-methylation of the 5' cap and bear a 5'-triphosphate group instead, are specific from viruses, providing a molecular signature to distinguish between self and non-self mRNAs by the host during viral infection. Directly binds PPP-RNA in a non-sequence-specific manner. Also recognizes and selectively binds AT-rich dsDNA. Additionally, as a mediator in innate immunity, positively regulates IKK-NFKB signaling by sinergizing the recruitment of IKK to MAP3K7. The chain is Interferon-induced protein with tetratricopeptide repeats 5 (IFIT5) from Homo sapiens (Human).